A 115-amino-acid polypeptide reads, in one-letter code: Large ribosomal subunit protein bL19 (115 aa).

It belongs to the bacterial ribosomal protein bL19 family.

Its function is as follows. This protein is located at the 30S-50S ribosomal subunit interface and may play a role in the structure and function of the aminoacyl-tRNA binding site. The protein is Large ribosomal subunit protein bL19 of Pectobacterium carotovorum subsp. carotovorum (strain PC1).